Here is a 480-residue protein sequence, read N- to C-terminus: Acetyl-coenzyme A carboxylase carboxyl transferase subunit beta, chloroplastic (480 aa).

In terms of domain architecture, CoA carboxyltransferase N-terminal spans 212-480 (LWVQCENCYG…FPLNQINKYK (269 aa)). Zn(2+) contacts are provided by C216, C219, C235, and C238. Residues 216 to 238 (CENCYGLNYQKFFRSKMNICERC) form a C4-type zinc finger.

Belongs to the AccD/PCCB family. In terms of assembly, acetyl-CoA carboxylase is a heterohexamer composed of biotin carboxyl carrier protein, biotin carboxylase and 2 subunits each of ACCase subunit alpha and ACCase plastid-coded subunit beta (accD). Zn(2+) serves as cofactor.

It localises to the plastid. The protein localises to the chloroplast stroma. The catalysed reaction is N(6)-carboxybiotinyl-L-lysyl-[protein] + acetyl-CoA = N(6)-biotinyl-L-lysyl-[protein] + malonyl-CoA. The protein operates within lipid metabolism; malonyl-CoA biosynthesis; malonyl-CoA from acetyl-CoA: step 1/1. Functionally, component of the acetyl coenzyme A carboxylase (ACC) complex. Biotin carboxylase (BC) catalyzes the carboxylation of biotin on its carrier protein (BCCP) and then the CO(2) group is transferred by the transcarboxylase to acetyl-CoA to form malonyl-CoA. This is Acetyl-coenzyme A carboxylase carboxyl transferase subunit beta, chloroplastic from Illicium oligandrum (Star anise).